A 196-amino-acid chain; its full sequence is Large ribosomal subunit protein uL5 (196 aa).

The protein belongs to the universal ribosomal protein uL5 family. Part of the 50S ribosomal subunit; part of the 5S rRNA/L5/L18/L25 subcomplex. Contacts the 5S rRNA and the P site tRNA. Forms a bridge to the 30S subunit in the 70S ribosome.

This is one of the proteins that bind and probably mediate the attachment of the 5S RNA into the large ribosomal subunit, where it forms part of the central protuberance. In the 70S ribosome it contacts protein S13 of the 30S subunit (bridge B1b), connecting the 2 subunits; this bridge is implicated in subunit movement. Contacts the P site tRNA; the 5S rRNA and some of its associated proteins might help stabilize positioning of ribosome-bound tRNAs. In Prosthecochloris aestuarii (strain DSM 271 / SK 413), this protein is Large ribosomal subunit protein uL5.